Reading from the N-terminus, the 570-residue chain is L-ascorbate oxidase (570 aa).

The signal sequence occupies residues 1 to 18; it reads MGMWWIVAVAILAHTASA. 2 Plastocyanin-like domains span residues 33-140 and 154-317; these read WPDC…IIDV and FNLL…LNYV. Cystine bridges form between Cys36/Cys219, Cys98/Cys557, and Cys197/Cys211. His77 and His79 together coordinate Cu cation. Residue Asn109 is glycosylated (N-linked (GlcNAc...) asparagine). Positions 121 and 123 each coordinate Cu cation. Residue Asn196 is glycosylated (N-linked (GlcNAc...) asparagine). Residues Asn229, Asn343, Asn384, Asn407, Asn434, Asn442, and Asn458 are each glycosylated (N-linked (GlcNAc...) asparagine). One can recognise a Plastocyanin-like 3 domain in the interval 426-543; sequence RNRNAKQGNV…MGMGVVFAEG (118 aa). Cu cation contacts are provided by His463, His466, His468, His525, Cys526, His527, His531, and Met536.

It belongs to the multicopper oxidase family. In terms of assembly, dimer. It depends on Cu cation as a cofactor.

Its subcellular location is the secreted. The catalysed reaction is 4 L-ascorbate + O2 = 4 monodehydro-L-ascorbate radical + 2 H2O. It participates in cofactor degradation; L-ascorbate degradation. In terms of biological role, ascorbate oxidase involved in a redox system involving ascorbic acid (AsA). The oxidation of AsA represses responses to high salinity and oxidative stress conditions such as vegetative growth and seed production reductions. Negative regulator of defense responses toward incompatible Turnip mosaic virus (TuMV strain UK1) by preventing jasmonic acid (JA)- dependent accumulation of ascorbic acid (AsA, AS) and dehydroascobic acid (DHA). This Brassica rapa subsp. pekinensis (Chinese cabbage) protein is L-ascorbate oxidase.